The primary structure comprises 338 residues: Citramalyl-CoA lyase, mitochondrial (338 aa).

The transit peptide at 1 to 20 (MALCVLRNTVRGAAALPRLK) directs the protein to the mitochondrion. Substrate-binding residues include Y48, K55, and K59. 3 positions are modified to N6-acetyllysine: K55, K59, and K64. 2 positions are modified to N6-acetyllysine; alternate: K80 and K90. 2 positions are modified to N6-succinyllysine; alternate: K80 and K90. A substrate-binding site is contributed by R105. E169 and D204 together coordinate Mg(2+). 270–271 (IH) is a substrate binding site. K307 carries the N6-succinyllysine modification. D318 is a catalytic residue.

The protein belongs to the HpcH/HpaI aldolase family. Citrate lyase beta subunit-like subfamily. In terms of assembly, homotrimer. It depends on Mg(2+) as a cofactor. Detected in brown fat, brain, liver, kidney, heart, skeletal muscle and ovary (at protein level).

Its subcellular location is the mitochondrion. The catalysed reaction is glyoxylate + acetyl-CoA + H2O = (S)-malate + CoA + H(+). It carries out the reaction propanoyl-CoA + glyoxylate + H2O = 3-methylmalate + CoA + H(+). It catalyses the reaction (3S)-citramalyl-CoA = pyruvate + acetyl-CoA. The enzyme catalyses (S)-malyl-CoA + H2O = (S)-malate + CoA + H(+). Its function is as follows. Mitochondrial citramalyl-CoA lyase indirectly involved in the vitamin B12 metabolism. Converts citramalyl-CoA into acetyl-CoA and pyruvate in the C5-dicarboxylate catabolism pathway. The C5-dicarboxylate catabolism pathway is required to detoxify itaconate, a vitamin B12-poisoning metabolite. Also acts as a malate synthase in vitro, converting glyoxylate and acetyl-CoA to malate. Also displays malyl-CoA thioesterase activity. Also acts as a beta-methylmalate synthase in vitro, by mediating conversion of glyoxylate and propionyl-CoA to beta-methylmalate. Also has very weak citramalate synthase activity in vitro. The sequence is that of Citramalyl-CoA lyase, mitochondrial from Mus musculus (Mouse).